The sequence spans 512 residues: GMP synthase [glutamine-hydrolyzing] (512 aa).

Positions 7–197 (TILILDFGGQ…LFEVCDCSAD (191 aa)) constitute a Glutamine amidotransferase type-1 domain. Cys84 serves as the catalytic Nucleophile. Active-site residues include His171 and Glu173. In terms of domain architecture, GMPS ATP-PPase spans 198 to 387 (WTMDSLIEQT…LGIPDEILYR (190 aa)). 225–231 (SGGVDSA) is an ATP binding site.

In terms of assembly, homodimer.

It catalyses the reaction XMP + L-glutamine + ATP + H2O = GMP + L-glutamate + AMP + diphosphate + 2 H(+). Its pathway is purine metabolism; GMP biosynthesis; GMP from XMP (L-Gln route): step 1/1. Catalyzes the synthesis of GMP from XMP. The chain is GMP synthase [glutamine-hydrolyzing] from Caldanaerobacter subterraneus subsp. tengcongensis (strain DSM 15242 / JCM 11007 / NBRC 100824 / MB4) (Thermoanaerobacter tengcongensis).